A 661-amino-acid chain; its full sequence is Cyclic di-GMP phosphodiesterase PdeR (661 aa).

The region spanning 109 to 179 (GLSFAEQVVS…RRNNRVFFRS (71 aa)) is the PAS domain. The 133-residue stretch at 265–397 (NKVGVVYLDL…GRGQFCVFTP (133 aa)) folds into the GGDEF domain. The EAL domain maps to 406-658 (YLWLDTNLRK…AFERWYKRYL (253 aa)).

As to quaternary structure, interacts with DgcM and MlrA.

It catalyses the reaction 3',3'-c-di-GMP + H2O = 5'-phosphoguanylyl(3'-&gt;5')guanosine + H(+). Its function is as follows. Part of a signaling cascade that regulates curli biosynthesis. The cascade is composed of two cyclic-di-GMP (c-di-GMP) control modules, in which c-di-GMP controlled by the DgcE/PdeH pair (module I) regulates the activity of the DgcM/PdeR pair (module II), which in turn regulates activity of the transcription factor MlrA and expression of the master biofilm regulator csgD. PdeR acts as a trigger enzyme that connects modules I and II. It inhibits DgcM and MlrA by direct interaction. Inhibition is relieved when PdeR binds and degrades c-di-GMP generated by module I. The chain is Cyclic di-GMP phosphodiesterase PdeR from Escherichia coli (strain K12).